The sequence spans 126 residues: Fluoride-specific ion channel FluC (126 aa).

The next 4 helical transmembrane spans lie at 4–24 (FMLLGFIAFGGAFGACARYLI), 35–55 (GFPYGTLTVNIVGSLIMGVLM), 71–91 (IIGLGFLGALTTFSTFSMDNV), and 104–124 (LNILLNVTLSITACFIGFQLM). The Na(+) site is built by glycine 78 and threonine 81.

This sequence belongs to the fluoride channel Fluc/FEX (TC 1.A.43) family.

Its subcellular location is the cell inner membrane. The catalysed reaction is fluoride(in) = fluoride(out). Its activity is regulated as follows. Na(+) is not transported, but it plays an essential structural role and its presence is essential for fluoride channel function. Fluoride-specific ion channel. Important for reducing fluoride concentration in the cell, thus reducing its toxicity. This Aliivibrio salmonicida (strain LFI1238) (Vibrio salmonicida (strain LFI1238)) protein is Fluoride-specific ion channel FluC.